Consider the following 1071-residue polypeptide: SLIT-ROBO Rho GTPase-activating protein 2 (1071 aa).

The F-BAR domain maps to 22 to 325 (KEIRAQLTEQ…AVENLDATSD (304 aa)). Over residues 181 to 203 (LKEAEKQEEKQIGKSVKQEDRQT) the composition is skewed to basic and acidic residues. A disordered region spans residues 181 to 211 (LKEAEKQEEKQIGKSVKQEDRQTPRSPDSTA). Residue Ser206 is modified to Phosphoserine. Residues 362 to 401 (VQSELVQRCQQLQSRLSTLKIENEEVKKTMEATLQTIQDI) are a coiled coil. Ser427, Ser500, Ser691, and Ser695 each carry phosphoserine. Residues 489-679 (ARRSSTVRKQ…TIIIQHENIF (191 aa)) enclose the Rho-GAP domain. Residues 698 to 726 (DYCDSPHGETTSVEDSTQDVTAEHHTSDD) form a disordered region. Residues 705 to 717 (GETTSVEDSTQDV) show a composition bias toward polar residues. Ser724 is modified (phosphoserine). Residues 728–787 (CEPIEAIAKFDYVGRTARELSFKKGASLLLYQRASDDWWEGRHNGIDGLIPHQYIVVQDT) enclose the SH3 domain. A Phosphoserine modification is found at Ser795. The segment at 837–936 (QRKRPESGSI…RSKSFNNHRP (100 aa)) is disordered. The segment covering 855–866 (HGLSSSLTDSSS) has biased composition (low complexity). Polar residues-rich tracts occupy residues 874–885 (RPSSQPIMSQSL) and 897–907 (GHGSLNSISRH). A Phosphoserine modification is found at Ser916. The segment covering 919 to 933 (IRKTATAGRSKSFNN) has biased composition (polar residues). Arg927 carries the post-translational modification Symmetric dimethylarginine; by PRMT5. Ser930 carries the post-translational modification Phosphoserine. A coiled-coil region spans residues 940–967 (EVIAQDIEATMNSALNELRELERQSSVK). The tract at residues 983-1012 (SPVVAPTSEPSSPLHTQLLKDPEPAFQRSA) is disordered. Ser990, Ser994, Ser1013, and Ser1027 each carry phosphoserine. Residues 1029-1071 (KMAAPVKPPATRPKPTVFPKTNATSPGVNSSTSPQSTDKSCTV) form a disordered region. The span at 1047–1071 (PKTNATSPGVNSSTSPQSTDKSCTV) shows a compositional bias: polar residues.

Homodimer. Heterodimer; forms a heterodimer with SRGAP2C, altering SRGAP2 function. Forms a heterooligomer with SRGAP1 and SRGAP3 through its F-BAR domain. Interacts (via SH3 domain) with GPHN. Interacts (via SH3 domain) with FMNL1 (activated by RAC1); regulates the actin filament severing activity of FMNL1 and actin dynamics. Interacts (via SH3 domain) with FMNL3. Interacts with RAC1; specifically stimulates RAC1 GTPase activity. Interacts (via F-BAR domain) with HOMER1. Interacts with ROBO1 and ROBO2. Interacts with FASLG. Interacts with PRMT5. Post-translationally, methylation at Arg-927 is required for the stimulation of cell migration, dimerization and localization at the plasma membrane protrusions.

The protein resides in the cell membrane. The protein localises to the cell projection. Its subcellular location is the dendritic spine. It is found in the postsynaptic density. It localises to the postsynaptic cell membrane. The protein resides in the lamellipodium. The protein localises to the cytoplasmic vesicle. Its subcellular location is the phagosome. It is found in the nucleus. It localises to the cytoplasm. The protein resides in the cytosol. With respect to regulation, activity is strongly inhibited by SRGAP2C, which heterodimerize with SRGAP2/SRGAP2A, thereby reducing SRGAP2/SRGAP2A levels through proteasome-dependent degradation. Its function is as follows. Postsynaptic RAC1 GTPase activating protein (GAP) that plays a key role in neuronal morphogenesis and migration mainly during development of the cerebral cortex. Regulates excitatory and inhibitory synapse maturation and density in cortical pyramidal neurons. SRGAP2/SRGAP2A limits excitatory and inhibitory synapse density through its RAC1-specific GTPase activating activity, while it promotes maturation of both excitatory and inhibitory synapses through its ability to bind to the postsynaptic scaffolding protein HOMER1 at excitatory synapses, and the postsynaptic protein GPHN at inhibitory synapses. Mechanistically, acts by binding and deforming membranes, thereby regulating actin dynamics to regulate cell migration and differentiation. Promotes cell repulsion and contact inhibition of locomotion: localizes to protrusions with curved edges and controls the duration of RAC1 activity in contact protrusions. In non-neuronal cells, may also play a role in cell migration by regulating the formation of lamellipodia and filopodia. The chain is SLIT-ROBO Rho GTPase-activating protein 2 from Homo sapiens (Human).